Here is a 268-residue protein sequence, read N- to C-terminus: 3-methyl-2-oxobutanoate hydroxymethyltransferase (268 aa).

Mg(2+) is bound by residues Asp-46 and Asp-85. 3-methyl-2-oxobutanoate-binding positions include Asp-46 to Ser-47, Asp-85, and Lys-115. Glu-117 provides a ligand contact to Mg(2+). Residue Glu-184 is the Proton acceptor of the active site.

This sequence belongs to the PanB family. In terms of assembly, homodecamer; pentamer of dimers. Mg(2+) serves as cofactor.

The protein localises to the cytoplasm. The enzyme catalyses 3-methyl-2-oxobutanoate + (6R)-5,10-methylene-5,6,7,8-tetrahydrofolate + H2O = 2-dehydropantoate + (6S)-5,6,7,8-tetrahydrofolate. It participates in cofactor biosynthesis; (R)-pantothenate biosynthesis; (R)-pantoate from 3-methyl-2-oxobutanoate: step 1/2. Catalyzes the reversible reaction in which hydroxymethyl group from 5,10-methylenetetrahydrofolate is transferred onto alpha-ketoisovalerate to form ketopantoate. The protein is 3-methyl-2-oxobutanoate hydroxymethyltransferase of Magnetococcus marinus (strain ATCC BAA-1437 / JCM 17883 / MC-1).